The sequence spans 89 residues: MSITPERKQALISEYGAKAGDTGSPEVQVAILSERISNLTEHFKSHNKDNHSRRGLLKLVSQRRSLLDYLKKKDEGRYKTLIGRLGLRR.

It belongs to the universal ribosomal protein uS15 family. Part of the 30S ribosomal subunit. Forms a bridge to the 50S subunit in the 70S ribosome, contacting the 23S rRNA.

In terms of biological role, one of the primary rRNA binding proteins, it binds directly to 16S rRNA where it helps nucleate assembly of the platform of the 30S subunit by binding and bridging several RNA helices of the 16S rRNA. Its function is as follows. Forms an intersubunit bridge (bridge B4) with the 23S rRNA of the 50S subunit in the ribosome. The sequence is that of Small ribosomal subunit protein uS15 from Azorhizobium caulinodans (strain ATCC 43989 / DSM 5975 / JCM 20966 / LMG 6465 / NBRC 14845 / NCIMB 13405 / ORS 571).